A 540-amino-acid polypeptide reads, in one-letter code: Protein SOSEKI 3 (540 aa).

Residues 32-123 are DIX-like oligomerization domain; sequence KKVQIVYYLS…YVLKGSELFD (92 aa). 2 disordered regions span residues 147-201 and 219-294; these read EPPS…DAKN and ADAS…SSLG. 2 stretches are compositionally biased toward low complexity: residues 150 to 163 and 185 to 194; these read SSRSMDDSSSSSSM and RSVSSSGVSP. Over residues 221–244 the composition is skewed to polar residues; it reads ASTQTDETVSGRSKTPIETFSRGV. Residues 246-256 are compositionally biased toward acidic residues; it reads TDEDVSSEPET. Over residues 280 to 292 the composition is skewed to low complexity; it reads NSVSPPFSNSASS. The short motif at 342 to 343 is the Association to cell membranes element; sequence CG. The interval 412-492 is disordered; the sequence is KKDAADSNAS…KNIPCTTKTH (81 aa). Over residues 418–437 the composition is skewed to polar residues; that stretch reads SNASLKRSSSYNGDRASNQM. Residues 471 to 482 are compositionally biased toward basic and acidic residues; that stretch reads SEKRRDSSEDTT.

This sequence belongs to the SOSEKI family. In terms of assembly, homodimer. Forms long polymer filaments with other SOKs proteins polymers (e.g. SOK1, SOK2, SOK3 and SOK4) crucial for polar localization and biological activity. Binds to ANGUSTIFOLIA (AN). In terms of tissue distribution, expressed during embryogenesis and in roots.

It localises to the cell membrane. SOSEKI proteins (SOK1-5) locally interpret global polarity cues and can influence cell division orientation to coordinate cell polarization relative to body axes, probably by guiding ANGUSTIFOLIA (AN) polarized localization. The polypeptide is Protein SOSEKI 3 (Arabidopsis thaliana (Mouse-ear cress)).